A 210-amino-acid chain; its full sequence is MKNKLDLSLYLVATKGSKSEECFLNTLENAIKGGVSIIQLREKELNAREFYKLGLKVQKLCKSYKIPFLINDRVDIALALDADGVHLGQEDLEAKLARKLLGDEKIIGLSLKKLEQLEFIQGVNYLGCGAIKATPTKESSLLSLELLSQICDKSPIGVVAIGGIDKEALVELKGINLSGVAVVRAIMDAKDAFLAAKELKRKIYENLSLK.

Residues 39 to 43 and N71 contribute to the 4-amino-2-methyl-5-(diphosphooxymethyl)pyrimidine site; that span reads QLREK. Residues D72 and D91 each coordinate Mg(2+). 4-amino-2-methyl-5-(diphosphooxymethyl)pyrimidine is bound at residue S110. 2-[(2R,5Z)-2-carboxy-4-methylthiazol-5(2H)-ylidene]ethyl phosphate is bound at residue 134-136; it reads TPT. K137 contributes to the 4-amino-2-methyl-5-(diphosphooxymethyl)pyrimidine binding site. G163 serves as a coordination point for 2-[(2R,5Z)-2-carboxy-4-methylthiazol-5(2H)-ylidene]ethyl phosphate.

The protein belongs to the thiamine-phosphate synthase family. The cofactor is Mg(2+).

It catalyses the reaction 2-[(2R,5Z)-2-carboxy-4-methylthiazol-5(2H)-ylidene]ethyl phosphate + 4-amino-2-methyl-5-(diphosphooxymethyl)pyrimidine + 2 H(+) = thiamine phosphate + CO2 + diphosphate. The catalysed reaction is 2-(2-carboxy-4-methylthiazol-5-yl)ethyl phosphate + 4-amino-2-methyl-5-(diphosphooxymethyl)pyrimidine + 2 H(+) = thiamine phosphate + CO2 + diphosphate. It carries out the reaction 4-methyl-5-(2-phosphooxyethyl)-thiazole + 4-amino-2-methyl-5-(diphosphooxymethyl)pyrimidine + H(+) = thiamine phosphate + diphosphate. It functions in the pathway cofactor biosynthesis; thiamine diphosphate biosynthesis; thiamine phosphate from 4-amino-2-methyl-5-diphosphomethylpyrimidine and 4-methyl-5-(2-phosphoethyl)-thiazole: step 1/1. Its function is as follows. Condenses 4-methyl-5-(beta-hydroxyethyl)thiazole monophosphate (THZ-P) and 2-methyl-4-amino-5-hydroxymethyl pyrimidine pyrophosphate (HMP-PP) to form thiamine monophosphate (TMP). This Campylobacter jejuni subsp. jejuni serotype O:2 (strain ATCC 700819 / NCTC 11168) protein is Thiamine-phosphate synthase.